Reading from the N-terminus, the 245-residue chain is 5'-nucleotidase SurE (245 aa).

4 residues coordinate a divalent metal cation: Asp-8, Asp-9, Ser-39, and Asn-97.

The protein belongs to the SurE nucleotidase family. It depends on a divalent metal cation as a cofactor.

The protein resides in the cytoplasm. It catalyses the reaction a ribonucleoside 5'-phosphate + H2O = a ribonucleoside + phosphate. Nucleotidase that shows phosphatase activity on nucleoside 5'-monophosphates. The polypeptide is 5'-nucleotidase SurE (Clostridium kluyveri (strain NBRC 12016)).